We begin with the raw amino-acid sequence, 274 residues long: Penicillin-insensitive murein endopeptidase (274 aa).

Positions methionine 1–alanine 19 are cleaved as a signal peptide. 3 cysteine pairs are disulfide-bonded: cysteine 44-cysteine 265, cysteine 187-cysteine 235, and cysteine 216-cysteine 223. Residues histidine 110, histidine 113, aspartate 120, aspartate 147, histidine 150, and histidine 211 each coordinate Zn(2+). The segment at glutamate 224–proline 263 is disordered. The span at proline 245 to proline 263 shows a compositional bias: pro residues.

Belongs to the peptidase M74 family. Dimer. The cofactor is Zn(2+).

Its subcellular location is the periplasm. In terms of biological role, murein endopeptidase that cleaves the D-alanyl-meso-2,6-diamino-pimelyl amide bond that connects peptidoglycan strands. Likely plays a role in the removal of murein from the sacculus. In Klebsiella pneumoniae subsp. pneumoniae (strain ATCC 700721 / MGH 78578), this protein is Penicillin-insensitive murein endopeptidase.